We begin with the raw amino-acid sequence, 1014 residues long: Protein argonaute 2 (1014 aa).

Residues 1 to 15 (MERGGYRGGRGDGRG) show a composition bias toward basic and acidic residues. The tract at residues 1–137 (MERGGYRGGR…PSTSTTVVSE (137 aa)) is disordered. Composition is skewed to gly residues over residues 18 to 29 (GRGYGGGGGGGE) and 49 to 58 (RGGGNRGQGR). Residues 83-104 (QFQQPRPQVAPQPSQAPASYAG) are compositionally biased toward low complexity. Residues 105–114 (SVGGVAGRGA) are compositionally biased toward gly residues. The segment covering 121–137 (VPSDSASPSTSTTVVSE) has biased composition (low complexity). The PAZ domain occupies 369–482 (SVIEYLKLYF…VPMEFCDLVE (114 aa)). The Piwi domain occupies 666 to 965 (LVLCAMSRKD…VAFRGRMYHE (300 aa)). Interaction with guide RNA stretches follow at residues 857–858 (KR), 900–908 (HHGGIGTSK), and 937–959 (FTRC…VAFR).

It belongs to the argonaute family. Ago subfamily. In terms of assembly, interacts with NERD.

In terms of biological role, involved in RNA-mediated post-transcriptional gene silencing (PTGS). Main component of the RNA-induced silencing complex (RISC) that binds to a short guide RNA such as microRNA (miRNA) or small interfering RNA (siRNA). RISC uses the mature miRNA or siRNA as a guide for slicer-directed cleavage of homologous mRNAs to repress gene expression. Associates mainly with siRNAs of 21 nucleotide in length and preferentially recruits small RNAs with a 5' terminal adenosine. Probably involved in antiviral RNA silencing. Associates with siRNA derived from cucumber mosaic virus (CMV). Targeted by turnip yellows virus (TuYV) protein P0 (via F-box-like domain) for probable proteasome degradation and thereby inactivating AGO2 function in RNA silencing. Required to direct NERD-dependent DNA methylation and silencing. The sequence is that of Protein argonaute 2 (AGO2) from Arabidopsis thaliana (Mouse-ear cress).